A 329-amino-acid chain; its full sequence is MIRNSDYKNFVCCAVCNKIIPPAPFGKTFKRIHEYKPLKTRFYTHKDILDIGANILKKEEQFQEDILREHIAKAEAEVWAQANERQKQAVEKALEEANDRHKIEIQILKEEHQKDLQEVTAKTKTEMYQNMDDEMKREHLAAEQRMVHRIQRIMMECHREKVEAVEKARAEERHIAQEAIQAQKSKAVEEIVNTGVTVIKDEKTSVARLMREKEHEMSILYGIAQRQRQEEVQEVLQEAEKTHQATLGNMMDKLANTQGELLSIAKQLGIMTNWKDFLEEELQETRMAFQKYINYTFPKLSPGHADFILPERKKTPSNLVIKENKTTLD.

2 coiled-coil regions span residues 57–120 and 225–251; these read KKEE…QEVT and QRQR…GNMM.

This is an uncharacterized protein from Homo sapiens (Human).